Here is a 224-residue protein sequence, read N- to C-terminus: Propanediol dehydratase medium subunit (224 aa).

Positions 1-18 (MEINEKLLRQIIEDVLRD) are targets protein to the BMC.

It belongs to the diol/glycerol dehydratase medium subunit family. The propanediol dehydratase enzyme is a heterotrimeric complex composed of a large (PduC), a medium (PduD) and a small (PduE) subunit. It depends on adenosylcob(III)alamin as a cofactor.

The protein localises to the bacterial microcompartment. The enzyme catalyses propane-1,2-diol = propanal + H2O. Its pathway is polyol metabolism; 1,2-propanediol degradation. Inhibited by glycerol. Functionally, part of the PduCDE complex that catalyzes the dehydration of 1,2-propanediol (1,2-PD) to propionaldehyde. Required for S.typhimurium growth on 1,2-PD as the sole carbon and energy source. This subunit is directly targeted to the bacterial microcompartment (BMC) dedicated to 1,2-PD degradation, and is also responsible for targeting the other 2 subunits (pduC and pduE). The 1,2-PD-specific bacterial microcompartment (BMC) concentrates low levels of 1,2-PD catabolic enzymes, concentrates volatile reaction intermediates thus enhancing pathway flux and keeps the level of toxic, mutagenic propionaldehyde low. In Salmonella typhimurium (strain LT2 / SGSC1412 / ATCC 700720), this protein is Propanediol dehydratase medium subunit.